The chain runs to 210 residues: Probable nicotinate-nucleotide adenylyltransferase (210 aa).

This sequence belongs to the NadD family.

It catalyses the reaction nicotinate beta-D-ribonucleotide + ATP + H(+) = deamido-NAD(+) + diphosphate. The protein operates within cofactor biosynthesis; NAD(+) biosynthesis; deamido-NAD(+) from nicotinate D-ribonucleotide: step 1/1. In terms of biological role, catalyzes the reversible adenylation of nicotinate mononucleotide (NaMN) to nicotinic acid adenine dinucleotide (NaAD). In Methylococcus capsulatus (strain ATCC 33009 / NCIMB 11132 / Bath), this protein is Probable nicotinate-nucleotide adenylyltransferase.